The chain runs to 318 residues: NAC domain-containing protein 59 (318 aa).

The 151-residue stretch at 24 to 174 (LPPGFRFHPT…ECVISRVFHT (151 aa)) folds into the NAC domain. A DNA-binding region spans residues 121 to 180 (VGMKKTLVFYKGRAPKGVKTNWVMHEYRLEGKFAIDNLSKTAKNECVISRVFHTRTDGTK).

Mostly expressed in root cortex, phloem, atrichoblast and quiescent center (QC), and, to a lower extent, in root endodermis, xylem, pericycle, columella and lateral root cap (LRC). Expressed in roots, cotyledons, very young leaves, senescing leaves, mature flowers and pollen.

The protein resides in the nucleus. Functionally, transcription activator that binds to DNA in promoters of target genes on a specific bipartite motif 5'-[AG]CGT[AG](4-5n)[AG][CT]ACGCAA-3'. Triggers the expression of senescence-associated genes during age-, salt- and dark-induced senescence through a regulatory network that may involve cross-talk with salt- and H(2)O(2)-dependent signaling pathways. This is NAC domain-containing protein 59 from Arabidopsis thaliana (Mouse-ear cress).